Consider the following 149-residue polypeptide: MHCPFCSENDTKVIDSRLVADGHQVRRRRQCLACNERFTTFETAELVMPRVIKSNGNREPFDEEKMIGGLQRALEKRPVSADAIELAISTIKSKLRATGEREVPSKLIGNLVMEQLKVLDKVAYIRFASVYRSFEDVREFGEEIAKLQD.

The segment at 3–34 (CPFCSENDTKVIDSRLVADGHQVRRRRQCLAC) is a zinc-finger region. Residues 49-139 (PRVIKSNGNR…VYRSFEDVRE (91 aa)) enclose the ATP-cone domain.

It belongs to the NrdR family. The cofactor is Zn(2+).

Functionally, negatively regulates transcription of bacterial ribonucleotide reductase nrd genes and operons by binding to NrdR-boxes. The protein is Transcriptional repressor NrdR of Vibrio cholerae serotype O1 (strain ATCC 39541 / Classical Ogawa 395 / O395).